The sequence spans 383 residues: Sulfate adenylyltransferase (383 aa).

The protein belongs to the sulfate adenylyltransferase family.

It carries out the reaction sulfate + ATP + H(+) = adenosine 5'-phosphosulfate + diphosphate. It participates in sulfur metabolism; hydrogen sulfide biosynthesis; sulfite from sulfate: step 1/3. The chain is Sulfate adenylyltransferase from Halothermothrix orenii (strain H 168 / OCM 544 / DSM 9562).